The following is a 317-amino-acid chain: 4-hydroxy-3-methylbut-2-enyl diphosphate reductase (317 aa).

A [4Fe-4S] cluster-binding site is contributed by cysteine 12. The (2E)-4-hydroxy-3-methylbut-2-enyl diphosphate site is built by histidine 41 and histidine 74. Positions 41 and 74 each coordinate dimethylallyl diphosphate. Positions 41 and 74 each coordinate isopentenyl diphosphate. Cysteine 97 provides a ligand contact to [4Fe-4S] cluster. Residue histidine 125 coordinates (2E)-4-hydroxy-3-methylbut-2-enyl diphosphate. Position 125 (histidine 125) interacts with dimethylallyl diphosphate. Position 125 (histidine 125) interacts with isopentenyl diphosphate. The active-site Proton donor is glutamate 127. Threonine 168 contributes to the (2E)-4-hydroxy-3-methylbut-2-enyl diphosphate binding site. Residue cysteine 198 participates in [4Fe-4S] cluster binding. (2E)-4-hydroxy-3-methylbut-2-enyl diphosphate contacts are provided by serine 226, serine 227, asparagine 228, and serine 270. Dimethylallyl diphosphate is bound by residues serine 226, serine 227, asparagine 228, and serine 270. Isopentenyl diphosphate is bound by residues serine 226, serine 227, asparagine 228, and serine 270.

The protein belongs to the IspH family. Homodimer. [4Fe-4S] cluster is required as a cofactor.

It catalyses the reaction isopentenyl diphosphate + 2 oxidized [2Fe-2S]-[ferredoxin] + H2O = (2E)-4-hydroxy-3-methylbut-2-enyl diphosphate + 2 reduced [2Fe-2S]-[ferredoxin] + 2 H(+). The enzyme catalyses dimethylallyl diphosphate + 2 oxidized [2Fe-2S]-[ferredoxin] + H2O = (2E)-4-hydroxy-3-methylbut-2-enyl diphosphate + 2 reduced [2Fe-2S]-[ferredoxin] + 2 H(+). The protein operates within isoprenoid biosynthesis; dimethylallyl diphosphate biosynthesis; dimethylallyl diphosphate from (2E)-4-hydroxy-3-methylbutenyl diphosphate: step 1/1. It participates in isoprenoid biosynthesis; isopentenyl diphosphate biosynthesis via DXP pathway; isopentenyl diphosphate from 1-deoxy-D-xylulose 5-phosphate: step 6/6. Functionally, catalyzes the conversion of 1-hydroxy-2-methyl-2-(E)-butenyl 4-diphosphate (HMBPP) into a mixture of isopentenyl diphosphate (IPP) and dimethylallyl diphosphate (DMAPP). Acts in the terminal step of the DOXP/MEP pathway for isoprenoid precursor biosynthesis. The sequence is that of 4-hydroxy-3-methylbut-2-enyl diphosphate reductase from Yersinia pseudotuberculosis serotype O:1b (strain IP 31758).